The following is a 179-amino-acid chain: Large ribosomal subunit protein uL6 (179 aa).

It belongs to the universal ribosomal protein uL6 family. In terms of assembly, part of the 50S ribosomal subunit.

Functionally, this protein binds to the 23S rRNA, and is important in its secondary structure. It is located near the subunit interface in the base of the L7/L12 stalk, and near the tRNA binding site of the peptidyltransferase center. The polypeptide is Large ribosomal subunit protein uL6 (Mycolicibacterium gilvum (strain PYR-GCK) (Mycobacterium gilvum (strain PYR-GCK))).